Reading from the N-terminus, the 574-residue chain is Proline--tRNA ligase (574 aa).

Belongs to the class-II aminoacyl-tRNA synthetase family. ProS type 1 subfamily. Homodimer.

Its subcellular location is the cytoplasm. The catalysed reaction is tRNA(Pro) + L-proline + ATP = L-prolyl-tRNA(Pro) + AMP + diphosphate. Its function is as follows. Catalyzes the attachment of proline to tRNA(Pro) in a two-step reaction: proline is first activated by ATP to form Pro-AMP and then transferred to the acceptor end of tRNA(Pro). As ProRS can inadvertently accommodate and process non-cognate amino acids such as alanine and cysteine, to avoid such errors it has two additional distinct editing activities against alanine. One activity is designated as 'pretransfer' editing and involves the tRNA(Pro)-independent hydrolysis of activated Ala-AMP. The other activity is designated 'posttransfer' editing and involves deacylation of mischarged Ala-tRNA(Pro). The misacylated Cys-tRNA(Pro) is not edited by ProRS. This chain is Proline--tRNA ligase, found in Marinomonas sp. (strain MWYL1).